A 281-amino-acid chain; its full sequence is Diaminopimelate epimerase (281 aa).

Positions 11 and 65 each coordinate substrate. Residue Cys74 is the Proton donor of the active site. Substrate is bound by residues 75–76 (GN), Asn164, Asn197, and 215–216 (ER). The active-site Proton acceptor is the Cys224. 225–226 (GT) contributes to the substrate binding site.

Belongs to the diaminopimelate epimerase family. Homodimer.

Its subcellular location is the cytoplasm. The enzyme catalyses (2S,6S)-2,6-diaminopimelate = meso-2,6-diaminopimelate. Its pathway is amino-acid biosynthesis; L-lysine biosynthesis via DAP pathway; DL-2,6-diaminopimelate from LL-2,6-diaminopimelate: step 1/1. Functionally, catalyzes the stereoinversion of LL-2,6-diaminopimelate (L,L-DAP) to meso-diaminopimelate (meso-DAP), a precursor of L-lysine and an essential component of the bacterial peptidoglycan. This Heliobacterium modesticaldum (strain ATCC 51547 / Ice1) protein is Diaminopimelate epimerase.